The following is a 455-amino-acid chain: Probable glycine dehydrogenase (decarboxylating) subunit 1 (455 aa).

It belongs to the GcvP family. N-terminal subunit subfamily. In terms of assembly, the glycine cleavage system is composed of four proteins: P, T, L and H. In this organism, the P 'protein' is a heterodimer of two subunits.

It carries out the reaction N(6)-[(R)-lipoyl]-L-lysyl-[glycine-cleavage complex H protein] + glycine + H(+) = N(6)-[(R)-S(8)-aminomethyldihydrolipoyl]-L-lysyl-[glycine-cleavage complex H protein] + CO2. Functionally, the glycine cleavage system catalyzes the degradation of glycine. The P protein binds the alpha-amino group of glycine through its pyridoxal phosphate cofactor; CO(2) is released and the remaining methylamine moiety is then transferred to the lipoamide cofactor of the H protein. This Francisella tularensis subsp. holarctica (strain LVS) protein is Probable glycine dehydrogenase (decarboxylating) subunit 1.